The sequence spans 1227 residues: Codanin-1 (1227 aa).

Ala-2 bears the N-acetylalanine mark. Residues Arg-63–Ala-294 form a disordered region. Thr-71 carries the post-translational modification Phosphothreonine. Residues Ala-128–Glu-137 are compositionally biased toward basic and acidic residues. A compositionally biased stretch (low complexity) spans Gly-155–Ser-167. Residues Pro-188–Leu-208 form an interaction with ASF1A/B region. Residues Cys-214–Asp-232 show a composition bias toward polar residues. Residues Leu-247 to Lys-260 are compositionally biased toward basic and acidic residues. Ser-265 and Ser-285 each carry phosphoserine. Transmembrane regions (helical) follow at residues Cys-312–Leu-332 and Phe-626–Leu-646.

In terms of assembly, found in a cytosolic complex with ASF1A, ASF1B, IPO4 and histones H3.1 and H4. As to expression, ubiquitously expressed. Isoform 3 is not found in erythroid cells.

The protein localises to the cytoplasm. The protein resides in the nucleus. It localises to the membrane. May act as a negative regulator of ASF1 in chromatin assembly. The sequence is that of Codanin-1 (CDAN1) from Homo sapiens (Human).